Reading from the N-terminus, the 65-residue chain is Disintegrin CC8A (65 aa).

Residues 1 to 65 (MNSAHPCCDP…SDCPRNRIKK (65 aa)) form the Disintegrin domain. Disulfide bonds link Cys7–Cys30, Cys21–Cys27, Cys26–Cys51, and Cys39–Cys58. The short motif at 43 to 45 (RGD) is the Cell attachment site element.

Belongs to the disintegrin family. Dimeric disintegrin subfamily. In terms of assembly, heterodimer with CC8B; disulfide-linked. In terms of tissue distribution, expressed by the venom gland.

Its subcellular location is the secreted. Inhibits integrins alpha-IIb/beta-3 (ITGA2B/ITGB3), alpha-V/beta-3 (ITGAV/ITGB3), and alpha-5/beta-1 (ITGA5/ITGB1). In Cerastes cerastes (Horned desert viper), this protein is Disintegrin CC8A.